Here is a 101-residue protein sequence, read N- to C-terminus: NAD(P)H-quinone oxidoreductase subunit 4L, chloroplastic (101 aa).

3 helical membrane passes run 2–22 (MLEH…YGLI), 32–52 (MCLE…SDFF), and 61–81 (ILSI…LAIV).

The protein belongs to the complex I subunit 4L family. NDH is composed of at least 16 different subunits, 5 of which are encoded in the nucleus.

It localises to the plastid. Its subcellular location is the chloroplast thylakoid membrane. The catalysed reaction is a plastoquinone + NADH + (n+1) H(+)(in) = a plastoquinol + NAD(+) + n H(+)(out). It catalyses the reaction a plastoquinone + NADPH + (n+1) H(+)(in) = a plastoquinol + NADP(+) + n H(+)(out). NDH shuttles electrons from NAD(P)H:plastoquinone, via FMN and iron-sulfur (Fe-S) centers, to quinones in the photosynthetic chain and possibly in a chloroplast respiratory chain. The immediate electron acceptor for the enzyme in this species is believed to be plastoquinone. Couples the redox reaction to proton translocation, and thus conserves the redox energy in a proton gradient. The protein is NAD(P)H-quinone oxidoreductase subunit 4L, chloroplastic of Buxus microphylla (Littleleaf boxwood).